The primary structure comprises 363 residues: DNA replication and repair protein RecF (363 aa).

33–40 (GDNGQGKT) is a binding site for ATP.

Belongs to the RecF family.

It is found in the cytoplasm. In terms of biological role, the RecF protein is involved in DNA metabolism; it is required for DNA replication and normal SOS inducibility. RecF binds preferentially to single-stranded, linear DNA. It also seems to bind ATP. This chain is DNA replication and repair protein RecF, found in Tropheryma whipplei (strain TW08/27) (Whipple's bacillus).